The following is a 223-amino-acid chain: MTNQNLNKDKAIVVFSGGQDSTTCLFYAKKHFKDVELVTFNYGQRHDAEIEVATRIAKEQNLKHHILDMSLLSQLTPNALTQHDMDIETGEDGIPNTFVPARNLLFLSFAGALAYQRNAKHIITGVCETDFSGYPDCRDSFIKSMNVTLSLSMDKDFVIHTPLMWLDKAQTWELSDELGVLDYIRHNTLTCYNGVIGDGCGECPACQLRQRGLQHYLEAKGAN.

15–25 is an ATP binding site; sequence FSGGQDSTTCL. Positions 191, 200, 203, and 206 each coordinate Zn(2+).

Belongs to the QueC family. In terms of assembly, homodimer. Zn(2+) serves as cofactor.

It catalyses the reaction 7-carboxy-7-deazaguanine + NH4(+) + ATP = 7-cyano-7-deazaguanine + ADP + phosphate + H2O + H(+). The protein operates within purine metabolism; 7-cyano-7-deazaguanine biosynthesis. Its function is as follows. Catalyzes the ATP-dependent conversion of 7-carboxy-7-deazaguanine (CDG) to 7-cyano-7-deazaguanine (preQ(0)). This chain is 7-cyano-7-deazaguanine synthase, found in Staphylococcus haemolyticus (strain JCSC1435).